The sequence spans 673 residues: MHSRSCLPPLLLLLLVLLGSGVQGCPSGCQCNQPQTVFCTARQGTTVPRDVPPDTVGLYIFENGITTLDVGCFAGLPGLQLLDLSQNQITSLPGGIFQPLVNLSNLDLTANKLHEISNETFRGLRRLERLYLGKNRIRHIQPGAFDALDRLLELKLPDNELRVLPPLHLPRLLLLDLSHNSIPALEAGILDTANVEALRLAGLGLRQLDEGLFGRLLNLHDLDVSDNQLEHMPSVIQGLRGLTRLRLAGNTRIAQIRPEDLAGLTALQELDVSNLSLQALPSDLSSLFPRLRLLAAARNPFNCLCPLSWFGPWVRENHVVLASPEETRCHFPPKNAGRLLLDLDYADFGCPVTTTTATVPTIRSTIREPTLSTSSQAPTWPSLTEPTTQASTVLSTAPPTMRPAPQPQDCPASICLNGGSCRLGARHHWECLCPEGFIGLYCESPVEQGMKPSSIPDTPRPPPLLPLSIEPVSPTSLRVKLQRYLQGNTVQLRSLRLTYRNLSGPDKRLVTLRLPASLAEYTVTQLRPNATYSICVTPLGAGRTPEGEEACGEANTSQAVRSNHAPVTQAREGNLPLLIAPALAAVLLAVLAAAGAAYCVRRARATSTAQDKGQVGPGTGPLELEGVKAPLEPGSKATEGGGEALSGGPECEVPLMGYPGPSLQGVLPAKHYI.

Positions 1 to 24 are cleaved as a signal peptide; the sequence is MHSRSCLPPLLLLLLVLLGSGVQG. Residues 25 to 53 enclose the LRRNT domain; it reads CPSGCQCNQPQTVFCTARQGTTVPRDVPP. Residues 25-576 lie on the Extracellular side of the membrane; sequence CPSGCQCNQP…VTQAREGNLP (552 aa). 10 LRR repeats span residues 54–75, 78–99, 102–123, 126–147, 150–170, 171–192, 194–215, 218–239, 241–265, and 266–288; these read DTVG…CFAG, GLQL…IFQP, NLSN…TFRG, RLER…AFDA, RLLE…LHLP, RLLL…ILDT, NVEA…LFGR, NLHD…IQGL, GLTR…AGLT, and ALQE…SSLF. N-linked (GlcNAc...) asparagine glycosylation is found at Asn-102 and Asn-118. An N-linked (GlcNAc...) asparagine glycan is attached at Asn-274. Positions 299 to 352 constitute an LRRCT domain; that stretch reads NPFNCLCPLSWFGPWVRENHVVLASPEETRCHFPPKNAGRLLLDLDYADFGCPV. Residues 369–389 form a disordered region; that stretch reads PTLSTSSQAPTWPSLTEPTTQ. Over residues 370-389 the composition is skewed to polar residues; sequence TLSTSSQAPTWPSLTEPTTQ. An EGF-like domain is found at 406 to 443; sequence QPQDCPASICLNGGSCRLGARHHWECLCPEGFIGLYCE. 3 disulfide bridges follow: Cys-410/Cys-421, Cys-415/Cys-431, and Cys-433/Cys-442. One can recognise a Fibronectin type-III domain in the interval 463–559; that stretch reads PLLPLSIEPV…ACGEANTSQA (97 aa). Residues Asn-501, Asn-529, and Asn-555 are each glycosylated (N-linked (GlcNAc...) asparagine). Residues 577–597 traverse the membrane as a helical segment; that stretch reads LLIAPALAAVLLAVLAAAGAA. The Cytoplasmic portion of the chain corresponds to 598–673; that stretch reads YCVRRARATS…QGVLPAKHYI (76 aa). Positions 608–648 are disordered; that stretch reads TAQDKGQVGPGTGPLELEGVKAPLEPGSKATEGGGEALSGG.

In terms of assembly, interacts with TGFB1, TGFB2 and TGFB3. N-glycosylated.

Its subcellular location is the membrane. Functionally, may act as an inhibitor of TGF-beta signaling. The sequence is that of Vasorin (Vasn) from Mus musculus (Mouse).